The chain runs to 185 residues: Ribosome-recycling factor (185 aa).

The segment at 143–163 is disordered; that stretch reads RKDGEAGEDEVARAEKDLDKS.

This sequence belongs to the RRF family.

It is found in the cytoplasm. Its function is as follows. Responsible for the release of ribosomes from messenger RNA at the termination of protein biosynthesis. May increase the efficiency of translation by recycling ribosomes from one round of translation to another. This chain is Ribosome-recycling factor, found in Mycobacterium marinum (strain ATCC BAA-535 / M).